The primary structure comprises 367 residues: Pepsin A (367 aa).

Positions 1–42 (SIHRVPLKKGKSLRKQLKDHGLLEDFLKKHPYNPASKYHPVL) are cleaved as a propeptide — activation peptide. Residues 59-364 (YYGTISIGTP…DRANNKVGLS (306 aa)) enclose the Peptidase A1 domain. Aspartate 77 is a catalytic residue. Cysteine 90 and cysteine 95 are disulfide-bonded. Asparagine 113 carries N-linked (GlcNAc...) asparagine glycosylation. The cysteines at positions 251 and 255 are disulfide-linked. Aspartate 260 is a catalytic residue. A disulfide bridge connects residues cysteine 290 and cysteine 323.

Belongs to the peptidase A1 family.

The enzyme catalyses Preferential cleavage: hydrophobic, preferably aromatic, residues in P1 and P1' positions. Cleaves 1-Phe-|-Val-2, 4-Gln-|-His-5, 13-Glu-|-Ala-14, 14-Ala-|-Leu-15, 15-Leu-|-Tyr-16, 16-Tyr-|-Leu-17, 23-Gly-|-Phe-24, 24-Phe-|-Phe-25 and 25-Phe-|-Tyr-26 bonds in the B chain of insulin.. In terms of biological role, shows particularly broad specificity; although bonds involving phenylalanine and leucine are preferred, many others are also cleaved to some extent. In Gallus gallus (Chicken), this protein is Pepsin A (PGA).